We begin with the raw amino-acid sequence, 348 residues long: Phosphate acyltransferase (348 aa).

It belongs to the PlsX family. As to quaternary structure, homodimer. Probably interacts with PlsY.

It localises to the cytoplasm. The enzyme catalyses a fatty acyl-[ACP] + phosphate = an acyl phosphate + holo-[ACP]. Its pathway is lipid metabolism; phospholipid metabolism. Functionally, catalyzes the reversible formation of acyl-phosphate (acyl-PO(4)) from acyl-[acyl-carrier-protein] (acyl-ACP). This enzyme utilizes acyl-ACP as fatty acyl donor, but not acyl-CoA. The chain is Phosphate acyltransferase from Rhizorhabdus wittichii (strain DSM 6014 / CCUG 31198 / JCM 15750 / NBRC 105917 / EY 4224 / RW1) (Sphingomonas wittichii).